Consider the following 100-residue polypeptide: Nucleoid-associated protein Rcas_2292 (100 aa).

It belongs to the YbaB/EbfC family. As to quaternary structure, homodimer.

The protein localises to the cytoplasm. The protein resides in the nucleoid. Binds to DNA and alters its conformation. May be involved in regulation of gene expression, nucleoid organization and DNA protection. The chain is Nucleoid-associated protein Rcas_2292 from Roseiflexus castenholzii (strain DSM 13941 / HLO8).